Reading from the N-terminus, the 78-residue chain is ATP synthase subunit c (78 aa).

2 helical membrane-spanning segments follow: residues 9–29 (AFIGAGLAMIAILGVGIGQGW) and 56–76 (AAVTETGALYCFIIAILLVFV).

The protein belongs to the ATPase C chain family. F-type ATPases have 2 components, F(1) - the catalytic core - and F(0) - the membrane proton channel. F(1) has five subunits: alpha(3), beta(3), gamma(1), delta(1), epsilon(1). F(0) has three main subunits: a(1), b(2) and c(10-14). The alpha and beta chains form an alternating ring which encloses part of the gamma chain. F(1) is attached to F(0) by a central stalk formed by the gamma and epsilon chains, while a peripheral stalk is formed by the delta and b chains.

Its subcellular location is the cell membrane. F(1)F(0) ATP synthase produces ATP from ADP in the presence of a proton or sodium gradient. F-type ATPases consist of two structural domains, F(1) containing the extramembraneous catalytic core and F(0) containing the membrane proton channel, linked together by a central stalk and a peripheral stalk. During catalysis, ATP synthesis in the catalytic domain of F(1) is coupled via a rotary mechanism of the central stalk subunits to proton translocation. Its function is as follows. Key component of the F(0) channel; it plays a direct role in translocation across the membrane. A homomeric c-ring of between 10-14 subunits forms the central stalk rotor element with the F(1) delta and epsilon subunits. The sequence is that of ATP synthase subunit c from Malacoplasma penetrans (strain HF-2) (Mycoplasma penetrans).